Consider the following 441-residue polypeptide: Histidine--tRNA ligase (441 aa).

The protein belongs to the class-II aminoacyl-tRNA synthetase family. In terms of assembly, homodimer.

It is found in the cytoplasm. The enzyme catalyses tRNA(His) + L-histidine + ATP = L-histidyl-tRNA(His) + AMP + diphosphate + H(+). In Koribacter versatilis (strain Ellin345), this protein is Histidine--tRNA ligase.